The following is a 342-amino-acid chain: S-adenosylmethionine:tRNA ribosyltransferase-isomerase (342 aa).

Belongs to the QueA family. As to quaternary structure, monomer.

Its subcellular location is the cytoplasm. It catalyses the reaction 7-aminomethyl-7-carbaguanosine(34) in tRNA + S-adenosyl-L-methionine = epoxyqueuosine(34) in tRNA + adenine + L-methionine + 2 H(+). Its pathway is tRNA modification; tRNA-queuosine biosynthesis. Its function is as follows. Transfers and isomerizes the ribose moiety from AdoMet to the 7-aminomethyl group of 7-deazaguanine (preQ1-tRNA) to give epoxyqueuosine (oQ-tRNA). This chain is S-adenosylmethionine:tRNA ribosyltransferase-isomerase, found in Streptococcus agalactiae serotype V (strain ATCC BAA-611 / 2603 V/R).